A 253-amino-acid polypeptide reads, in one-letter code: Methionine aminopeptidase (253 aa).

H78 is a substrate binding site. A divalent metal cation is bound by residues D95, D106, and H169. H176 is a substrate binding site. Residues E206 and E237 each contribute to the a divalent metal cation site.

It belongs to the peptidase M24A family. Methionine aminopeptidase type 1 subfamily. As to quaternary structure, monomer. Co(2+) serves as cofactor. It depends on Zn(2+) as a cofactor. Requires Mn(2+) as cofactor. Fe(2+) is required as a cofactor.

The catalysed reaction is Release of N-terminal amino acids, preferentially methionine, from peptides and arylamides.. In terms of biological role, removes the N-terminal methionine from nascent proteins. The N-terminal methionine is often cleaved when the second residue in the primary sequence is small and uncharged (Met-Ala-, Cys, Gly, Pro, Ser, Thr, or Val). Requires deformylation of the N(alpha)-formylated initiator methionine before it can be hydrolyzed. The chain is Methionine aminopeptidase from Helicobacter pylori (strain J99 / ATCC 700824) (Campylobacter pylori J99).